We begin with the raw amino-acid sequence, 311 residues long: 4-hydroxy-tetrahydrodipicolinate synthase (311 aa).

Pyruvate is bound at residue threonine 51. Tyrosine 140 acts as the Proton donor/acceptor in catalysis. Residue lysine 168 is the Schiff-base intermediate with substrate of the active site. Residue isoleucine 209 coordinates pyruvate.

It belongs to the DapA family. As to quaternary structure, homotetramer; dimer of dimers.

It is found in the cytoplasm. The catalysed reaction is L-aspartate 4-semialdehyde + pyruvate = (2S,4S)-4-hydroxy-2,3,4,5-tetrahydrodipicolinate + H2O + H(+). The protein operates within amino-acid biosynthesis; L-lysine biosynthesis via DAP pathway; (S)-tetrahydrodipicolinate from L-aspartate: step 3/4. Its function is as follows. Catalyzes the condensation of (S)-aspartate-beta-semialdehyde [(S)-ASA] and pyruvate to 4-hydroxy-tetrahydrodipicolinate (HTPA). This is 4-hydroxy-tetrahydrodipicolinate synthase from Streptococcus pneumoniae (strain ATCC 700669 / Spain 23F-1).